We begin with the raw amino-acid sequence, 314 residues long: Methionyl-tRNA formyltransferase (314 aa).

110 to 113 (SLLP) serves as a coordination point for (6S)-5,6,7,8-tetrahydrofolate.

It belongs to the Fmt family.

It catalyses the reaction L-methionyl-tRNA(fMet) + (6R)-10-formyltetrahydrofolate = N-formyl-L-methionyl-tRNA(fMet) + (6S)-5,6,7,8-tetrahydrofolate + H(+). Attaches a formyl group to the free amino group of methionyl-tRNA(fMet). The formyl group appears to play a dual role in the initiator identity of N-formylmethionyl-tRNA by promoting its recognition by IF2 and preventing the misappropriation of this tRNA by the elongation apparatus. The polypeptide is Methionyl-tRNA formyltransferase (Dichelobacter nodosus (strain VCS1703A)).